The sequence spans 306 residues: Putative dihydroorotate dehydrogenase A (fumarate) (306 aa).

FMN-binding positions include serine 24 and 48–49 (KS). Residues lysine 48, 72-76 (NAVGL), and asparagine 129 contribute to the substrate site. Asparagine 129 contacts FMN. Cysteine 132 (nucleophile) is an active-site residue. Lysine 167 and isoleucine 192 together coordinate FMN. 193–194 (NS) contacts substrate. FMN contacts are provided by residues glycine 218 and 244–245 (GG).

The protein belongs to the dihydroorotate dehydrogenase family. Type 1 subfamily. In terms of assembly, homodimer. FMN is required as a cofactor.

Its subcellular location is the cytoplasm. The catalysed reaction is (S)-dihydroorotate + fumarate = orotate + succinate. The protein operates within pyrimidine metabolism; UMP biosynthesis via de novo pathway. Catalyzes the conversion of dihydroorotate to orotate with fumarate as the electron acceptor. The sequence is that of Putative dihydroorotate dehydrogenase A (fumarate) (pyrD) from Aeropyrum pernix (strain ATCC 700893 / DSM 11879 / JCM 9820 / NBRC 100138 / K1).